The chain runs to 440 residues: Golgi reassembly-stacking protein 1 (440 aa).

Residue glycine 2 is the site of N-myristoyl glycine attachment. 2 PDZ GRASP-type domains span residues 15-105 and 111-199; these read EGFH…FCSF and QVWH…YGYL. A GRASP region spans residues 15–215; the sequence is EGFHLHGVQE…PPSYHKKPPG (201 aa). Residues histidine 18, histidine 20, and cysteine 103 each contribute to the Zn(2+) site. The interval 190–202 is essential for interaction with GOLGA2/GM130; the sequence is LGCGIGYGYLHRI. 3 disordered regions span residues 205 to 248, 261 to 301, and 327 to 440; these read QPPS…ETGS, PGSS…PVQR, and LPSS…STTE. The segment covering 214-239 has biased composition (pro residues); it reads PGTPPPSALPLGAPPPDALPPGPTPE. Position 216 is a phosphothreonine (threonine 216). Low complexity predominate over residues 327-336; that stretch reads LPSSTELTTT. Residues 337–351 are compositionally biased toward polar residues; that stretch reads AVSTSGPEDICSSSS. 3 positions are modified to phosphoserine: serine 362, serine 364, and serine 373.

Belongs to the GORASP family. As to quaternary structure, homodimer. Forms higher-order oligomers under interphase but not mitotic conditions. Dimers of the protein on one membrane might be able to interact with dimers on another and so stack cisternae. Interacts with the C-terminus of GOLGA2/GM130 under both mitotic and non-mitotic conditions. The interaction is critical for the correct targeting of both proteins to the cis-Golgi. Interacts with TMED2 and TMED3. In terms of processing, phosphorylated by CDC2/B1 and PLK kinases during mitosis. Phosphorylation cycle correlates with the cisternal stacking cycle. Phosphorylation of the homodimer prevents the association of dimers into higher-order oligomers, leading to cisternal unstacking. Target for caspase-3 cleavage during apoptosis. The cleavage contributes to Golgi fragmentation and occurs very early in the execution phase of apoptosis. Post-translationally, myristoylated.

It is found in the golgi apparatus. The protein localises to the cis-Golgi network membrane. The protein resides in the endoplasmic reticulum-Golgi intermediate compartment membrane. In terms of biological role, key structural protein of the Golgi apparatus. The membrane cisternae of the Golgi apparatus adhere to each other to form stacks, which are aligned side by side to form the Golgi ribbon. Acting in concert with GORASP2/GRASP55, is required for the formation and maintenance of the Golgi ribbon, and may be dispensable for the formation of stacks. However, other studies suggest that GORASP1 plays an important role in assembly and membrane stacking of the cisternae, and in the reassembly of Golgi stacks after breakdown during mitosis. Caspase-mediated cleavage of GORASP1 is required for fragmentation of the Golgi during apoptosis. Also mediates, via its interaction with GOLGA2/GM130, the docking of transport vesicles with the Golgi membranes. Mediates ER stress-induced unconventional (ER/Golgi-independent) trafficking of core-glycosylated CFTR to cell membrane. This chain is Golgi reassembly-stacking protein 1 (GORASP1), found in Homo sapiens (Human).